The primary structure comprises 114 residues: Evasin P1096 (114 aa).

The first 23 residues, 1–23, serve as a signal peptide directing secretion; that stretch reads MELNAFTILHIAVFIAVGYYANT. 3 disulfide bridges follow: cysteine 47–cysteine 65, cysteine 51–cysteine 67, and cysteine 61–cysteine 78. N-linked (GlcNAc...) asparagine glycosylation occurs at asparagine 50. The segment at 89-114 is disordered; sequence DPSQDPSIDEAAPRESVSKRRSNGES. Residues 99–114 are compositionally biased toward basic and acidic residues; sequence AAPRESVSKRRSNGES.

The protein resides in the secreted. Salivary chemokine-binding protein which binds to host chemokine CXCL8. This is Evasin P1096 from Ixodes ricinus (Common tick).